The primary structure comprises 850 residues: Serine/threonine-protein phosphatase 6 regulatory subunit 3-B (850 aa).

Disordered stretches follow at residues 610–652, 683–778, and 793–850; these read NISY…VNHE, SDGS…MKET, and KSEE…NGPV. Over residues 627-638 the composition is skewed to acidic residues; sequence DSEESTDSEEEE. Polar residues-rich tracts occupy residues 703–731 and 764–778; these read ASFS…TSTE and DQMT…MKET. Residues 826–839 are compositionally biased toward low complexity; that stretch reads PSSSSQEQRISEQI.

The protein belongs to the SAPS family.

In terms of biological role, regulatory subunit of protein phosphatase 6 (PP6). May function as a scaffolding PP6 subunit. In Xenopus laevis (African clawed frog), this protein is Serine/threonine-protein phosphatase 6 regulatory subunit 3-B (ppp6r3-b).